Reading from the N-terminus, the 368-residue chain is Putative alcohol dehydrogenase D (368 aa).

Zn(2+) contacts are provided by Cys40, His61, Cys91, Cys94, Cys97, Cys105, and Cys167.

This sequence belongs to the zinc-containing alcohol dehydrogenase family. It depends on Zn(2+) as a cofactor.

The enzyme catalyses a primary alcohol + NAD(+) = an aldehyde + NADH + H(+). It catalyses the reaction a secondary alcohol + NAD(+) = a ketone + NADH + H(+). In terms of biological role, required for maintaining the appropriate mycolic acid composition and permeability of the envelope on its exposure to acidic pH. The sequence is that of Putative alcohol dehydrogenase D (adhD) from Mycobacterium tuberculosis (strain CDC 1551 / Oshkosh).